We begin with the raw amino-acid sequence, 299 residues long: tRNA uridine(34) hydroxylase (299 aa).

The 95-residue stretch at 132-226 (ASRPVVMLDT…YFEEVGGAHY (95 aa)) folds into the Rhodanese domain. Cysteine 186 acts as the Cysteine persulfide intermediate in catalysis.

It belongs to the TrhO family.

It carries out the reaction uridine(34) in tRNA + AH2 + O2 = 5-hydroxyuridine(34) in tRNA + A + H2O. Functionally, catalyzes oxygen-dependent 5-hydroxyuridine (ho5U) modification at position 34 in tRNAs. The protein is tRNA uridine(34) hydroxylase of Burkholderia pseudomallei (strain K96243).